Here is a 419-residue protein sequence, read N- to C-terminus: Cytosine permease (419 aa).

Residues 1-19 (MSQDNNFSQGPVPQSARKG) lie on the Cytoplasmic side of the membrane. A helical transmembrane segment spans residues 20–39 (VLALTFVMLGLTFFSASMWT). Residues 40–51 (GGTLGTGLSYHD) lie on the Periplasmic side of the membrane. A helical membrane pass occupies residues 52–71 (FFLAVLIGNLLLGIYTSFLG). The Cytoplasmic portion of the chain corresponds to 72–100 (YIGAKTGLTTHLLARFSFGVKGSWLPSLL). Residues 101–120 (LGGTQVGWFGVGVAMFAIPV) form a helical membrane-spanning segment. Residues 121-127 (GKATGLD) lie on the Periplasmic side of the membrane. A helical membrane pass occupies residues 128-147 (INLLIAVSGLLMTVTVFFGI). Residues 148–152 (SALTV) are Cytoplasmic-facing. A helical membrane pass occupies residues 153-172 (LSLIAVPAIACLGGYSVWLA). Topologically, residues 173–192 (VNGMGGLDALKAVVPAQPLD) are periplasmic. The helical transmembrane segment at 193–212 (FNVALALVVGSFISAGTLTA) threads the bilayer. The Cytoplasmic segment spans residues 213-221 (DFVRFGRNA). Residues 222-242 (KLAVLVAMVAFFLGNSLMFIF) form a helical membrane-spanning segment. The Periplasmic portion of the chain corresponds to 243–257 (GAAGAAALGMADISD). Residues 258–277 (VMIAQGLLLPAIVVLGLNIW) form a helical membrane-spanning segment. At 278 to 300 (TTNDNALYASGLGFANITGMSSK) the chain is on the cytoplasmic side. Residues 301-320 (TLSVINGIIGTVCALWLYNN) traverse the membrane as a helical segment. Phe-321 is a topological domain (periplasmic). A helical membrane pass occupies residues 322–341 (VGWLTFLSAAIPPVGGVIIA). The Cytoplasmic segment spans residues 342–358 (DYLMNRRRYEHFATTRM). The helical transmembrane segment at 359–378 (MSVNWVAILAVALGIAAGHW) threads the bilayer. The Periplasmic segment spans residues 379 to 380 (LP). A helical membrane pass occupies residues 381 to 400 (GIVPVNAVLGGALSYLILNP). Over 401–419 (ILNRKTTAAMTHVEANSVE) the chain is Cytoplasmic.

The protein belongs to the purine-cytosine permease (2.A.39) family.

It localises to the cell inner membrane. Functionally, required for cytosine transport into the cell. The sequence is that of Cytosine permease (codB) from Escherichia coli O157:H7.